The sequence spans 214 residues: ATP synthase subunit 5, mitochondrial (214 aa).

Residues 1–24 constitute a mitochondrion transit peptide; sequence MFASRAIRMMSMRPMARTMATKAA.

As to quaternary structure, F-type ATP synthases have 2 components, the catalytic core F(1) and the membrane-embedded component F(0), linked together by a central stalk and a peripheral stalk. The central stalk, also called rotor shaft, is often seen as part of F(1). The peripheral stalk is seen as part of F(0). F(0) contains the membrane channel next to the rotor. F-type ATP synthases form dimers but each monomer functions independently in ATP generation. The dimer consists of 17 different polypeptides: ATP1 (subunit alpha, 3 molecules per monomer, part of F(1)), ATP2 (subunit beta, 3 copies per monomer, part of F(1)), ATP3 (subunit gamma, part of the central stalk), ATP4 (subunit b, part of the peripheral stalk), ATP5/OSCP (subunit 5/OSCP, part of the peripheral stalk), ATP6 (subunit a, part of the peripheral stalk), ATP7 (subunit d, part of the peripheral stalk), ATP8 (subunit 8, part of the peripheral stalk), OLI1 (subunit c, part of the rotor, 10 molecules per monomer), ATP14 (subunit h, part of the peripheral stalk), ATP15 (subunit epsilon, part of the central stalk), ATP16 (subunit delta, part of the central stalk), ATP17 (subunit f, part of the peripheral stalk), ATP18 (subunit i/j, part of the peripheral stalk), ATP19 (subunit k, dimer-specific, at interface between monomers), ATP20 (subunit g, at interface between monomers), TIM11 (subunit e, at interface between monomers).

Its subcellular location is the mitochondrion inner membrane. Mitochondrial membrane ATP synthase (F(1)F(0) ATP synthase or Complex V) produces ATP from ADP in the presence of a proton gradient across the membrane which is generated by electron transport complexes of the respiratory chain. F-type ATP synthases consist of two structural domains, F(1) - containing the extramembraneous catalytic core, and F(0) - containing the membrane proton channel, linked together by a central stalk and a peripheral stalk. During catalysis, ATP synthesis in the catalytic domain of F(1) is coupled via a rotary mechanism of the central stalk subunits to proton translocation. Part of the complex F(0) domain and the peripheral stalk, which acts as a stator to hold the catalytic alpha/ATP1(3)beta/ATP2(3) subcomplex and subunit a/ATP6 static relative to the rotary elements. The chain is ATP synthase subunit 5, mitochondrial from Yarrowia lipolytica (strain CLIB 122 / E 150) (Yeast).